Consider the following 483-residue polypeptide: Probable glycine dehydrogenase (decarboxylating) subunit 2 (483 aa).

Lys-264 carries the post-translational modification N6-(pyridoxal phosphate)lysine.

It belongs to the GcvP family. C-terminal subunit subfamily. In terms of assembly, the glycine cleavage system is composed of four proteins: P, T, L and H. In this organism, the P 'protein' is a heterodimer of two subunits. The cofactor is pyridoxal 5'-phosphate.

The enzyme catalyses N(6)-[(R)-lipoyl]-L-lysyl-[glycine-cleavage complex H protein] + glycine + H(+) = N(6)-[(R)-S(8)-aminomethyldihydrolipoyl]-L-lysyl-[glycine-cleavage complex H protein] + CO2. Functionally, the glycine cleavage system catalyzes the degradation of glycine. The P protein binds the alpha-amino group of glycine through its pyridoxal phosphate cofactor; CO(2) is released and the remaining methylamine moiety is then transferred to the lipoamide cofactor of the H protein. This chain is Probable glycine dehydrogenase (decarboxylating) subunit 2, found in Nitrosomonas eutropha (strain DSM 101675 / C91 / Nm57).